The following is a 335-amino-acid chain: tRNA pseudouridine synthase D (335 aa).

Asp77 serves as the catalytic Nucleophile. Positions 152–308 (GFPNYFTEQR…AQHLSWSFIP (157 aa)) constitute a TRUD domain.

The protein belongs to the pseudouridine synthase TruD family.

The catalysed reaction is uridine(13) in tRNA = pseudouridine(13) in tRNA. In terms of biological role, responsible for synthesis of pseudouridine from uracil-13 in transfer RNAs. This Histophilus somni (strain 129Pt) (Haemophilus somnus) protein is tRNA pseudouridine synthase D.